Reading from the N-terminus, the 183-residue chain is Protein Dr1 (183 aa).

In terms of domain architecture, Histone-fold spans 19 to 82; it reads TLPRASINKI…INAEHVLEAL (64 aa). Positions 92–183 are repression of TATA-containing promoters; that stretch reads QEAEAVLHDC…DDDDDDDDDY (92 aa). The interval 155–183 is disordered; it reads AMVQRPPLADGSVASKPSEDDDDDDDDDY. A compositionally biased stretch (acidic residues) spans 173 to 183; it reads EDDDDDDDDDY.

It belongs to the NC2 beta/DR1 family. Component of the Ada2a-containing (ATAC) complex composed of at least Ada2a, Atac1, Hcf, Ada3, Gcn5, Mocs2B, Charac-14, Atac3, Atac2, NC2beta and wds. Homodimer. Interacts with NC2-alpha/Drap1 to form the dNC2 complex.

The protein resides in the nucleus. Its function is as follows. Bifunctional basic transcription factor. Activates transcription of DPE (Downstream Promoter Element) containing promoters while repressing transcription of promoters which contain TATA elements. Together with Chrac-14, promotes nucleosome sliding of ATP-dependent nucleosome remodeling complexes. The sequence is that of Protein Dr1 (NC2beta) from Drosophila melanogaster (Fruit fly).